Here is a 258-residue protein sequence, read N- to C-terminus: MILVKLGGSVICGGGLDNVTNDVEPGTVLIHGGGCMVNSVMERMGVKPVILKHPNGYTSRYTDEETLKAYVMTMMLINKLIVSKLNARGIRAIGLSGVDLGLVTAKRKERVMIIDERGRTRVIDGGFSGRVTGVNVNIMNLMLSNSDVVVVSPIALSQEGLMLNVDGDQIAENIAISMNVKELVILTNVDGVLVNGKPIDKVTKANAQEILQYTTGGMRRKLETALKLTELGVRTIIANGLRDKPIRSALNGLGTVVE.

Residues 33–34, Arg60, and Asn164 each bind substrate; that span reads GG.

This sequence belongs to the acetylglutamate kinase family. LysZ subfamily.

It localises to the cytoplasm. The enzyme catalyses [amino-group carrier protein]-C-terminal-N-(1,4-dicarboxybutan-1-yl)-L-glutamine + ATP = [amino-group carrier protein]-C-terminal-N-(1-carboxy-5-phosphooxy-5-oxopentan-1-yl)-L-glutamine + ADP. The catalysed reaction is [amino-group carrier protein]-C-terminal-gamma-(L-glutamyl)-L-glutamate + ATP = [amino-group carrier protein]-C-terminal-gamma-(5-phospho-L-glutamyl)-L-glutamate + ADP. It functions in the pathway amino-acid biosynthesis; L-lysine biosynthesis via AAA pathway; L-lysine from L-alpha-aminoadipate (Thermus route): step 2/5. Its pathway is amino-acid biosynthesis; L-arginine biosynthesis. Functionally, involved in both the arginine and lysine biosynthetic pathways. Phosphorylates the LysW-bound precursors glutamate (for arginine biosynthesis), respectively alpha-aminoadipate (for lysine biosynthesis). The protein is Putative [LysW]-aminoadipate/[LysW]-glutamate kinase of Caldivirga maquilingensis (strain ATCC 700844 / DSM 13496 / JCM 10307 / IC-167).